The primary structure comprises 89 residues: Conotoxin Bu5 (89 aa).

The signal sequence occupies residues 1–22 (MKLTCVLIVAVLFLTACQLATA). Residues 23 to 49 (ENSREEQGYSAVRSSDQIQDSDLKLTK) constitute a propeptide that is removed on maturation. Cystine bridges form between cysteine 51–cysteine 66, cysteine 58–cysteine 70, and cysteine 65–cysteine 79. Cysteine 79 is modified (cysteine amide). Residues 80 to 89 (GVSIDYYDSR) constitute a propeptide that is removed on maturation.

Belongs to the conotoxin O1 superfamily. In terms of tissue distribution, expressed by the venom duct.

Its subcellular location is the secreted. This Conus bullatus (Bubble cone) protein is Conotoxin Bu5.